Reading from the N-terminus, the 385-residue chain is Phosphate acyltransferase (385 aa).

Residues 1 to 17 (MAAGTSIGTTPGGSTSP) show a composition bias toward low complexity. A disordered region spans residues 1 to 28 (MAAGTSIGTTPGGSTSPETPPEHGLTGT).

It belongs to the PlsX family. Homodimer. Probably interacts with PlsY.

It localises to the cytoplasm. It catalyses the reaction a fatty acyl-[ACP] + phosphate = an acyl phosphate + holo-[ACP]. The protein operates within lipid metabolism; phospholipid metabolism. Functionally, catalyzes the reversible formation of acyl-phosphate (acyl-PO(4)) from acyl-[acyl-carrier-protein] (acyl-ACP). This enzyme utilizes acyl-ACP as fatty acyl donor, but not acyl-CoA. This Dinoroseobacter shibae (strain DSM 16493 / NCIMB 14021 / DFL 12) protein is Phosphate acyltransferase.